A 156-amino-acid chain; its full sequence is Toxin Res (156 aa).

This sequence belongs to the MbcT/ParT/Res family. In terms of assembly, homodimer. Forms a complex with cognate antitoxin Xre.

Functionally, toxic component of a type II toxin-antitoxin (TA) system. Expression in E.coli inhibits cell growth; bacteriostasis is neutralized by expression of cognate antitoxin Xre. Expression in E.coli leads to almost complete depletion of intracellular NAD(+): NAD(+) levels are partially restored when coexpressed with antitoxin Xre. This Photorhabdus laumondii subsp. laumondii (strain DSM 15139 / CIP 105565 / TT01) (Photorhabdus luminescens subsp. laumondii) protein is Toxin Res.